Consider the following 531-residue polypeptide: Probable calcium-binding mitochondrial carrier F17E5.2 (531 aa).

EF-hand domains follow at residues 70–105 (EKEK…QAHI), 106–135 (PASV…NYVI), 136–171 (AHEA…MGVN), and 172–207 (LDDQ…YPST). Positions 83, 85, 87, 89, and 94 each coordinate Ca(2+). Ca(2+) is bound by residues aspartate 149, asparagine 151, aspartate 153, glutamate 155, and glutamate 160. Solcar repeat units follow at residues 242-328 (GVWW…IKRW), 338-424 (LSTI…LKSM), and 435-525 (PGVL…VRKQ). 6 consecutive transmembrane segments (helical) span residues 248–265 (LVAG…TAPF), 303–322 (GNGI…FMCY), 348–361 (SSAG…IYPM), 399–418 (GYLP…LTVY), 441–458 (LACG…SYPL), and 500–517 (GITP…ISYV).

It belongs to the mitochondrial carrier (TC 2.A.29) family.

It is found in the mitochondrion inner membrane. Functionally, calcium-dependent mitochondrial solute carrier. This chain is Probable calcium-binding mitochondrial carrier F17E5.2, found in Caenorhabditis elegans.